Here is a 665-residue protein sequence, read N- to C-terminus: Auxin response factor 1 (665 aa).

A DNA-binding region (TF-B3) is located at residues 124–226 (FCKTLTASDT…ELRVGVRRHM (103 aa)). Disordered stretches follow at residues 356–408 (VANS…SVPL), 496–542 (PVPS…RQIR), and 645–665 (KADA…AGSR). 3 stretches are compositionally biased toward polar residues: residues 497–519 (VPSN…SDIP), 530–542 (LRSP…RQIR), and 651–665 (NGNT…AGSR). The region spanning 542 to 635 (RSCTKVHMQG…EVKKLSPKNK (94 aa)) is the PB1 domain.

This sequence belongs to the ARF family. As to quaternary structure, homodimers and heterodimers. Interacts with the auxin-responsive proteins IAA12, IAA13, IAA17 and with ARF2. Binds to RIN13 in the nucleus. In terms of tissue distribution, expressed in the whole plant.

It localises to the nucleus. The protein localises to the cytoplasm. In terms of biological role, auxin response factors (ARFs) are transcriptional factors that bind specifically to the DNA sequence 5'-TGTCTC-3' found in the auxin-responsive promoter elements (AuxREs). Seems to act as transcriptional repressor. Formation of heterodimers with Aux/IAA proteins may alter their ability to modulate early auxin response genes expression. Promotes flowering, stamen development, floral organ abscission and fruit dehiscence. Acts as a repressor of IAA2, IAA3 and IAA7. Together with RIN13, promotes leaf senescence and cell death. The chain is Auxin response factor 1 from Arabidopsis thaliana (Mouse-ear cress).